The primary structure comprises 312 residues: Malate dehydrogenase (312 aa).

Residues 12 to 17 (GAGFTG) and aspartate 36 each bind NAD(+). Residues arginine 87 and arginine 93 each contribute to the substrate site. Residues asparagine 100 and 123 to 125 (LTN) contribute to the NAD(+) site. Residue asparagine 125 participates in substrate binding. Serine 149 is modified (phosphoserine). Arginine 156 provides a ligand contact to substrate. The active-site Proton acceptor is histidine 180.

It belongs to the LDH/MDH superfamily. MDH type 3 family.

The catalysed reaction is (S)-malate + NAD(+) = oxaloacetate + NADH + H(+). Its function is as follows. Catalyzes the reversible oxidation of malate to oxaloacetate. This Geobacillus kaustophilus (strain HTA426) protein is Malate dehydrogenase.